The sequence spans 537 residues: Tyrosine-protein kinase Yes (537 aa).

Basic and acidic residues predominate over residues 1 to 22 (MGCIKSKEDKGPSIKYRTEPKP). The disordered stretch occupies residues 1–60 (MGCIKSKEDKGPSIKYRTEPKPDPGSQYGADPTQATQSPGIKGPAPNFNSHSMTPFGGSS). Gly-2 carries N-myristoyl glycine lipidation. A lipid anchor (S-palmitoyl cysteine; in membrane form) is attached at Cys-3. The SH3 domain occupies 85-146 (GGVTVFVALY…PSNYVAPADS (62 aa)). The region spanning 152–249 (WYFGKMGRKD…GLCYRLTTVC (98 aa)) is the SH2 domain. In terms of domain architecture, Protein kinase spans 271–524 (LRLDVKLGQG…YIQSFLEDYF (254 aa)). ATP-binding positions include 277–285 (LGQGCFGEV) and Lys-299. Asp-390 functions as the Proton acceptor in the catalytic mechanism. Tyr-420 bears the Phosphotyrosine; by autocatalysis mark. Tyr-531 is subject to Phosphotyrosine; by CSK.

Belongs to the protein kinase superfamily. Tyr protein kinase family. SRC subfamily. In terms of processing, autophosphorylated at Tyr-420 inducing activation. Post-translationally, palmitoylation at Cys-3 promotes membrane localization.

It is found in the cell membrane. It localises to the cytoplasm. Its subcellular location is the cytoskeleton. The protein resides in the microtubule organizing center. The protein localises to the centrosome. It is found in the cytosol. It localises to the cell junction. It carries out the reaction L-tyrosyl-[protein] + ATP = O-phospho-L-tyrosyl-[protein] + ADP + H(+). Its function is as follows. Non-receptor protein tyrosine kinase that is involved in the regulation of cell growth and survival, apoptosis, cell-cell adhesion, cytoskeleton remodeling, differentiation, G2/M progression and cytokinesis. In Xenopus laevis (African clawed frog), this protein is Tyrosine-protein kinase Yes (yes1).